Reading from the N-terminus, the 336-residue chain is Transmembrane protease serine 12 (336 aa).

The signal sequence occupies residues 1–18 (MASWALSAALLCLGGAFA). At 19-312 (YSELHSLSLR…HYLSQGNINR (294 aa)) the chain is on the extracellular side. The Peptidase S1 domain maps to 66–306 (IIGGSQADTG…FQEWMTHYLS (241 aa)). Cys-95 and Cys-111 are disulfide-bonded. Catalysis depends on charge relay system residues His-110 and Asp-159. 3 disulfides stabilise this stretch: Cys-194-Cys-262, Cys-225-Cys-241, and Cys-252-Cys-282. 3 N-linked (GlcNAc...) asparagine glycosylation sites follow: Asn-207, Asn-237, and Asn-246. Residue Ser-256 is the Charge relay system of the active site. Residues 313–333 (LFNMDIVLGQVLTALGSVILL) form a helical membrane-spanning segment. Over 334 to 336 (GVT) the chain is Cytoplasmic.

Belongs to the peptidase S1 family. In terms of tissue distribution, exclusively expressed in the testis, from spermatocytes to elongated spermatids (at protein level).

It is found in the cell membrane. It localises to the cytoplasmic vesicle. The protein localises to the secretory vesicle. Its subcellular location is the acrosome. In terms of biological role, required for male fertility. Plays a critical role in sperm capacitation and acrosome reactions during fertilization, and also plays a role in the regulation of proteins involved in spermatogenesis. Regulates protein pathways that promote chromosomal synapsis formation, double-strand break repair, formation of the inner mitochondrial membrane cristae and apoptosis in developing sperm. Required for normal sperm motility and binding to the zona pellucida, potentially via a role in ADAM3 protein maturation. The polypeptide is Transmembrane protease serine 12 (Mus musculus (Mouse)).